We begin with the raw amino-acid sequence, 238 residues long: Urease accessory protein UreF (238 aa).

It belongs to the UreF family. In terms of assembly, ureD, UreF and UreG form a complex that acts as a GTP-hydrolysis-dependent molecular chaperone, activating the urease apoprotein by helping to assemble the nickel containing metallocenter of UreC. The UreE protein probably delivers the nickel.

It localises to the cytoplasm. Functionally, required for maturation of urease via the functional incorporation of the urease nickel metallocenter. This is Urease accessory protein UreF from Delftia acidovorans (strain DSM 14801 / SPH-1).